Consider the following 31-residue polypeptide: Cliotide T11 (31 aa).

The segment at residues 1-31 (GIPCGESCVFIPCTITALLGCSCKDKVCYKN) is a cross-link (cyclopeptide (Gly-Asn)). 3 disulfides stabilise this stretch: C4–C21, C8–C23, and C13–C28.

Contains 3 disulfide bonds. Post-translationally, this is a cyclic peptide. In terms of tissue distribution, expressed in seed but not in root, nodule, flower, stem, shoot, leaf and pod (at protein level).

Probably participates in a plant defense mechanism. This chain is Cliotide T11, found in Clitoria ternatea (Butterfly pea).